The sequence spans 597 residues: MAASTSMVPVAVTAAVAPVLSINSDFSDLREIKKQLLLIAGLTRERGLLHSSKWSAELAFSLPALPLAELQPPPPITEEDAQDMDAYTLAKAYFDVKEYDRAAHFLHGCNSKKAYFLYMYSRYLSGEKKKDDETVDSLGPLEKGQVKNEALRELRVELSKKHQARELDGFGLYLYGVVLRKLDLVKEAIDVFVEATHVLPLHWGAWLELCNLITDKEMLKFLSLPDTWMKEFFLAHIYTELQLIEEALQKYQNLIDVGFSKSSYIVSQIAVAYHNIRDIDKALSIFNELRKQDPYRIENMDTFSNLLYVRSMKSELSYLAHNLCEIDKYRVETCCVIGNYYSLRSQHEKAALYFQRALKLNPRYLGAWTLMGHEYMEMKNTSAAIQAYRHAIEVNKRDYRAWYGLGQTYEILKMPFYCLYYYRRAHQLRPNDSRMLVALGECYEKLNQLVEAKKCYWRAYAVGDVEKMALVKLAKLHEQLTESEQAAQCYIKYIQDIYSCGEIVEHLEESTAFRYLAQYYFKCKLWDEASTCAQKCCAFNDTREEGKALLRQILQLRNQGETPTTEVPAPFFLPASLSANNTPTRRVSPLNLSSVTP.

A2 bears the N-acetylalanine mark. TPR repeat units lie at residues 27–63, 73–112, and 114–144; these read SDLREIKKQLLLIAGLTRERGLLHSSKWSAELAFSLP, PPPITEEDAQDMDAYTLAKAYFDVKEYDRAAHFLHGCNSK, and AYFLYMYSRYLSGEKKKDDETVDSLGPLEKG. Residue K147 forms a Glycyl lysine isopeptide (Lys-Gly) (interchain with G-Cter in SUMO2) linkage. TPR repeat units follow at residues 169 to 200, 229 to 259, 263 to 293, 297 to 327, 331 to 361, 366 to 395, 400 to 432, and 433 to 466; these read GFGLYLYGVVLRKLDLVKEAIDVFVEATHVLP, MKEFFLAHIYTELQLIEEALQKYQNLIDVGF, SYIVSQIAVAYHNIRDIDKALSIFNELRKQD, IENMDTFSNLLYVRSMKSELSYLAHNLCEID, VETCCVIGNYYSLRSQHEKAALYFQRALKLN, GAWTLMGHEYMEMKNTSAAIQAYRHAIEVN, RAWYGLGQTYEILKMPFYCLYYYRRAHQLRPND, and SRMLVALGECYEKLNQLVEAKKCYWRAYAVGDVE. At Y273 the chain carries Phosphotyrosine. K467 is subject to N6-acetyllysine. TPR repeat units follow at residues 468-500 and 504-540; these read MALVKLAKLHEQLTESEQAAQCYIKYIQDIYSC and VEHLEESTAFRYLAQYYFKCKLWDEASTCAQKCCAFN. A phosphothreonine mark is found at T562 and T565. S578 carries the phosphoserine modification. T582 bears the Phosphothreonine mark. 2 positions are modified to phosphoserine: S588 and S593. T596 carries the phosphothreonine modification.

Belongs to the APC8/CDC23 family. As to quaternary structure, the mammalian APC/C is composed at least of 14 distinct subunits ANAPC1, ANAPC2, CDC27/APC3, ANAPC4, ANAPC5, CDC16/APC6, ANAPC7, CDC23/APC8, ANAPC10, ANAPC11, CDC26/APC12, ANAPC13, ANAPC15 and ANAPC16 that assemble into a complex of at least 19 chains with a combined molecular mass of around 1.2 MDa; APC/C interacts with FZR1 and FBXO5. Interacts with FBXO43; the interaction is direct. In terms of processing, phosphorylated. Phosphorylation on Thr-562 occurs specifically during mitosis.

It functions in the pathway protein modification; protein ubiquitination. Component of the anaphase promoting complex/cyclosome (APC/C), a cell cycle-regulated E3 ubiquitin ligase that controls progression through mitosis and the G1 phase of the cell cycle. The APC/C complex acts by mediating ubiquitination and subsequent degradation of target proteins: it mainly mediates the formation of 'Lys-11'-linked polyubiquitin chains and, to a lower extent, the formation of 'Lys-48'- and 'Lys-63'-linked polyubiquitin chains. The APC/C complex catalyzes assembly of branched 'Lys-11'-/'Lys-48'-linked branched ubiquitin chains on target proteins. The chain is Cell division cycle protein 23 homolog (CDC23) from Homo sapiens (Human).